The following is a 337-amino-acid chain: GTPase Obg (337 aa).

The 159-residue stretch at 1-159 (MDFIDEVKLY…RNIVLKLKVL (159 aa)) folds into the Obg domain. In terms of domain architecture, OBG-type G spans 160–329 (SDVGIIGMPN…LNEKVKTKEI (170 aa)). GTP is bound by residues 166-173 (GMPNVGKS), 191-195 (FTTIR), 212-215 (DIPG), 279-282 (NKCD), and 310-312 (DDD). Residues Ser-173 and Thr-193 each coordinate Mg(2+).

It belongs to the TRAFAC class OBG-HflX-like GTPase superfamily. OBG GTPase family. In terms of assembly, monomer. The cofactor is Mg(2+).

It localises to the cytoplasm. Functionally, an essential GTPase which binds GTP, GDP and possibly (p)ppGpp with moderate affinity, with high nucleotide exchange rates and a fairly low GTP hydrolysis rate. Plays a role in control of the cell cycle, stress response, ribosome biogenesis and in those bacteria that undergo differentiation, in morphogenesis control. This Wolbachia pipientis subsp. Culex pipiens (strain wPip) protein is GTPase Obg.